Consider the following 404-residue polypeptide: Cytochrome b561 and DOMON domain-containing protein At5g35735 (404 aa).

The signal sequence occupies residues 1 to 25 (MDRTQSPKTALFAVLATLLVLTVNG). The DOMON domain occupies 49-164 (LGSFLHWTYN…ITANQLWQVG (116 aa)). Residues 170-369 (VPASHQTSGD…LEPLTWFIVL (200 aa)) enclose the Cytochrome b561 domain. Residues 172–207 (ASHQTSGDNMRSSGRIDFRTGQASAGGGGSGDRLRK) are disordered. Positions 173-183 (SHQTSGDNMRS) are enriched in polar residues. Helical transmembrane passes span 210 to 230 (THGVLNAVSWGVLMPMGAMMA) and 241 to 261 (WFYLHIAFQVSGYVIGVAGWA). 3 residues coordinate heme b: H211, H245, and H278. A helical transmembrane segment spans residues 280–300 (NLGIALFTFATLQVFALLVRP). H314 lines the heme b pocket. 2 consecutive transmembrane segments (helical) span residues 316–336 (TVGYTTIILSIVNIFKGFDIL) and 349–369 (ILIFLGACVLILEPLTWFIVL). Residues 376–404 (GNTVAAPTSSKYSNGVNGTTTTGPHHQDA) are disordered. A compositionally biased stretch (polar residues) spans 380–404 (AAPTSSKYSNGVNGTTTTGPHHQDA).

It depends on heme b as a cofactor.

The protein localises to the membrane. Functionally, may act as a catecholamine-responsive trans-membrane electron transporter. This Arabidopsis thaliana (Mouse-ear cress) protein is Cytochrome b561 and DOMON domain-containing protein At5g35735.